The primary structure comprises 675 residues: INO80 complex subunit D (675 aa).

Disordered regions lie at residues 1 to 39 (MNNN…NVNQ), 183 to 203 (TGNN…NSTP), 274 to 324 (LKQK…ERQV), 473 to 523 (DSNK…KLNK), and 627 to 675 (VPVT…TMIS). Low complexity-rich tracts occupy residues 282 to 318 (QQLQ…QLQI), 482 to 519 (NNDN…NNNN), and 634 to 648 (NQNN…TNNS). A compositionally biased stretch (basic and acidic residues) spans 664–675 (EILKDSDNTMIS).

This sequence belongs to the INO80D family. As to quaternary structure, component of the chromatin-remodeling INO80 complex.

Its subcellular location is the nucleus. Its function is as follows. Putative regulatory component of the chromatin remodeling INO80 complex which is involved in transcriptional regulation, DNA replication and probably DNA repair. The polypeptide is INO80 complex subunit D (Dictyostelium discoideum (Social amoeba)).